The following is a 331-amino-acid chain: Probable deacetylase MTH_1194 (331 aa).

The active-site Proton donor/acceptor is the His118. Residues Asp155, His157, and Asp244 each contribute to the Zn(2+) site.

This sequence belongs to the histone deacetylase family. It depends on Zn(2+) as a cofactor.

Its function is as follows. Probable deacetylase. In Methanothermobacter thermautotrophicus (strain ATCC 29096 / DSM 1053 / JCM 10044 / NBRC 100330 / Delta H) (Methanobacterium thermoautotrophicum), this protein is Probable deacetylase MTH_1194.